The primary structure comprises 436 residues: Protein 60A (436 aa).

The first 27 residues, 1–27, serve as a signal peptide directing secretion; the sequence is MTASLVVLPSLWLILIIFTAPYTHCTQ. Residues 28–317 constitute a propeptide that is removed on maturation; it reads SGIYIDNGKD…STLHQRKKSK (290 aa). N-linked (GlcNAc...) asparagine glycans are attached at residues Asn-102, Asn-114, Asn-217, and Asn-229. The interval 293-322 is disordered; sequence IKSTSGHSTQKRTKRSTLHQRKKSKSEPVN. Residues 301–316 show a composition bias toward basic residues; it reads TQKRTKRSTLHQRKKS. 3 cysteine pairs are disulfide-bonded: Cys-335–Cys-401, Cys-364–Cys-433, and Cys-368–Cys-435. Asn-377 carries an N-linked (GlcNAc...) asparagine glycan.

The protein belongs to the TGF-beta family. As to quaternary structure, homodimer; disulfide-linked.

It is found in the secreted. The sequence is that of Protein 60A (gbb) from Drosophila virilis (Fruit fly).